The sequence spans 323 residues: Aspartate carbamoyltransferase catalytic subunit (323 aa).

Residues arginine 71 and threonine 72 each coordinate carbamoyl phosphate. Lysine 99 contacts L-aspartate. Carbamoyl phosphate is bound by residues arginine 121, histidine 151, and glutamine 154. Positions 184 and 239 each coordinate L-aspartate. Carbamoyl phosphate contacts are provided by glycine 280 and proline 281.

This sequence belongs to the aspartate/ornithine carbamoyltransferase superfamily. ATCase family. In terms of assembly, heterododecamer (2C3:3R2) of six catalytic PyrB chains organized as two trimers (C3), and six regulatory PyrI chains organized as three dimers (R2).

It catalyses the reaction carbamoyl phosphate + L-aspartate = N-carbamoyl-L-aspartate + phosphate + H(+). It participates in pyrimidine metabolism; UMP biosynthesis via de novo pathway; (S)-dihydroorotate from bicarbonate: step 2/3. In terms of biological role, catalyzes the condensation of carbamoyl phosphate and aspartate to form carbamoyl aspartate and inorganic phosphate, the committed step in the de novo pyrimidine nucleotide biosynthesis pathway. This chain is Aspartate carbamoyltransferase catalytic subunit, found in Ralstonia pickettii (strain 12J).